Consider the following 422-residue polypeptide: MSKRNQARKVGRFMTMPNDPFKYSFDRLEDVADHISDVLRCPITIEDVNHKLLAYSTHSDCTDPARTSTIIGRRVPEKVINKLWKDGTIPALLKTDQPIRVKQIDEVGLSNRVAISIWKNKQVLGFIWALEIQKTLSDEDLLTLQMAAKAVKNKLLKLQIRKTKNEERSQEFFWKMLTGHIHQEDDMADGFHKLGMAAPSEFSVMIIRINGELTEKIEQQLQYLQETTQQVYVLLATVDSNELIILTSPKTDHPFQDLKQFALSTQKQLKERYKIEDVSIAFGGIYNSISFVSRSYQEALSVLKTKERFAEETKHLFSFSELGIYQYLDVLNEKRKQAGHYNYSLSKLEQYDRDHQSNMVETLERFIEADSNVNTASKLLNIHVNTLNYRLKRISQIAEIDLKNVNQKFTIYLDIKLRHMDL.

Belongs to the CdaR family.

Activates ald expression in response to alanine availability and is important for normal sporulation in B.subtilis. The polypeptide is DNA-binding transcriptional activator AdeR (Bacillus subtilis (strain 168)).